The chain runs to 460 residues: MLKILIPTIMLFPTTWFMNKKWLWSSITTHSLLISLLSLSWFKWNMDIGWDFSNQYLAIDPLSAPLLILTCWLLPLMILASQNHITPEPLTRQRIYISLLISLQVFLIMAFSATEMILFYIMFEATLIPTLIIITRWGNQTERLNAGTYFLFYTLIGSLPLLIALLFMQNDLNTLSMFIIQYSHLPNPSSWANKFWWTACLIAFLVKMPLYGVHLWLPKAHVEAPIAGSMILAAVLLKLGGYGMMRIIIMLNPITKEMAYPFIILAIWGIVMTSSICLRQTDLKSMIAYSSVSHMGLVAGAILIQTPWSFAGAITLMIAHGLVSSALFCLANTNYERIHSRTLLLARGVQVILPLMATWWLLANLANLALPPSPNLVGELLIISSLFNWSNWTILLTGIGVLITASYSLYMFLMTQRGLTSKHLMNLNPSHTREHLLLTLHVLPVLLLILKPELIWGWTF.

Transmembrane regions (helical) follow at residues 22–42 (WLWSSITTHSLLISLLSLSWF), 59–79 (IDPLSAPLLILTCWLLPLMIL), 94–113 (RIYISLLISLQVFLIMAFSA), 117–139 (ILFYIMFEATLIPTLIIITRWGN), 148–168 (TYFLFYTLIGSLPLLIALLFM), 195–215 (FWWTACLIAFLVKMPLYGVHL), 231–251 (ILAAVLLKLGGYGMMRIIIML), 258–278 (MAYPFIILAIWGIVMTSSICL), 286–306 (MIAYSSVSHMGLVAGAILIQT), 310–330 (FAGAITLMIAHGLVSSALFCL), 343–362 (LLLARGVQVILPLMATWWLL), 394–414 (ILLTGIGVLITASYSLYMFLM), and 436–456 (LLLTLHVLPVLLLILKPELIW).

This sequence belongs to the complex I subunit 4 family.

It localises to the mitochondrion membrane. It carries out the reaction a ubiquinone + NADH + 5 H(+)(in) = a ubiquinol + NAD(+) + 4 H(+)(out). In terms of biological role, core subunit of the mitochondrial membrane respiratory chain NADH dehydrogenase (Complex I) that is believed to belong to the minimal assembly required for catalysis. Complex I functions in the transfer of electrons from NADH to the respiratory chain. The immediate electron acceptor for the enzyme is believed to be ubiquinone. The chain is NADH-ubiquinone oxidoreductase chain 4 (MTND4) from Scyliorhinus canicula (Small-spotted catshark).